The following is a 501-amino-acid chain: NADH-quinone oxidoreductase subunit N (501 aa).

14 helical membrane-spanning segments follow: residues 4 to 24 (HLPI…RLLV), 34 to 54 (FVLA…AETL), 80 to 100 (LAGG…VYAG), 112 to 132 (GSFY…CATG), 134 to 154 (LFNL…LIAF), 167 to 187 (LIIG…LYAM), 207 to 227 (PVVI…MALF), 241 to 261 (PAPV…YALY), 278 to 298 (LQVL…MAIA), 314 to 334 (VGYI…GALL), 335 to 355 (HVLS…GVSW), 376 to 396 (MGAF…LGFF), 409 to 429 (GAWV…VYFF), and 463 to 483 (PASM…LGLF).

The protein belongs to the complex I subunit 2 family. NDH-1 is composed of 14 different subunits. Subunits NuoA, H, J, K, L, M, N constitute the membrane sector of the complex.

Its subcellular location is the cell membrane. The catalysed reaction is a quinone + NADH + 5 H(+)(in) = a quinol + NAD(+) + 4 H(+)(out). Its function is as follows. NDH-1 shuttles electrons from NADH, via FMN and iron-sulfur (Fe-S) centers, to quinones in the respiratory chain. The immediate electron acceptor for the enzyme in this species is believed to be a menaquinone. Couples the redox reaction to proton translocation (for every two electrons transferred, four hydrogen ions are translocated across the cytoplasmic membrane), and thus conserves the redox energy in a proton gradient. In Desulforudis audaxviator (strain MP104C), this protein is NADH-quinone oxidoreductase subunit N.